The primary structure comprises 185 residues: Capsid protein (185 aa).

A disordered region spans residues 136-185 (NAPILSTLPETTVVRRRDRGRSPRRRTPSPRRRRSQSPRRRRSQSRESQC). Basic residues predominate over residues 149–178 (VRRRDRGRSPRRRTPSPRRRRSQSPRRRRS). Ser157, Ser164, and Ser172 each carry phosphoserine; by host. The stretch at 157-163 (SPRRRTP) is one 1; half-length repeat. The segment at 157–179 (SPRRRTPSPRRRRSQSPRRRRSQ) is 3 X 8 AA repeats of S-P-R-R-R-[PR]-S-Q. A Bipartite nuclear localization signal motif is present at residues 160–177 (RRTPSPRRRRSQSPRRRR). Repeat copies occupy residues 164-171 (SPRRRRSQ) and 172-179 (SPRRRRSQ). An RNA binding region spans residues 179-185 (QSRESQC).

The protein belongs to the orthohepadnavirus core antigen family. Homodimerizes, then multimerizes. Interacts with cytosol exposed regions of viral L glycoprotein present in the reticulum-to-Golgi compartment. Interacts with human FLNB. Phosphorylated form interacts with host importin alpha; this interaction depends on the exposure of the NLS, which itself depends upon genome maturation and/or phosphorylation of the capsid protein. Interacts with host NUP153. Phosphorylated by host SRPK1, SRPK2, and maybe protein kinase C or GAPDH. Phosphorylation is critical for pregenomic RNA packaging. Protein kinase C phosphorylation is stimulated by HBx protein and may play a role in transport of the viral genome to the nucleus at the late step during the viral replication cycle.

Its subcellular location is the virion. The protein localises to the host cytoplasm. Its function is as follows. Self assembles to form an icosahedral capsid. Most capsids appear to be large particles with an icosahedral symmetry of T=4 and consist of 240 copies of capsid protein, though a fraction forms smaller T=3 particles consisting of 180 capsid proteins. Entering capsids are transported along microtubules to the nucleus. Phosphorylation of the capsid is thought to induce exposure of nuclear localization signal in the C-terminal portion of the capsid protein that allows binding to the nuclear pore complex via the importin (karyopherin-) alpha and beta. Capsids are imported in intact form through the nuclear pore into the nuclear basket, where it probably binds NUP153. Only capsids that contain the mature viral genome can release the viral DNA and capsid protein into the nucleoplasm. Immature capsids get stuck in the basket. Capsids encapsulate the pre-genomic RNA and the P protein. Pre-genomic RNA is reverse-transcribed into DNA while the capsid is still in the cytoplasm. The capsid can then either be directed to the nucleus, providing more genomes for transcription, or bud through the endoplasmic reticulum to provide new virions. The chain is Capsid protein from Homo sapiens (Human).